The chain runs to 237 residues: Urease accessory protein UreF (237 aa).

Belongs to the UreF family. In terms of assembly, ureD, UreF and UreG form a complex that acts as a GTP-hydrolysis-dependent molecular chaperone, activating the urease apoprotein by helping to assemble the nickel containing metallocenter of UreC. The UreE protein probably delivers the nickel.

It localises to the cytoplasm. Required for maturation of urease via the functional incorporation of the urease nickel metallocenter. This Methylibium petroleiphilum (strain ATCC BAA-1232 / LMG 22953 / PM1) protein is Urease accessory protein UreF.